The primary structure comprises 216 residues: Probable GTP-binding protein EngB (216 aa).

One can recognise an EngB-type G domain in the interval 43-216 (DRLEVCFAGR…TLRSIITDLT (174 aa)). Residues 51–58 (GRSNVGKS), 78–82 (GRTQE), 96–99 (DLPG), 163–166 (TKAD), and 197–199 (TSS) each bind GTP. Positions 58 and 80 each coordinate Mg(2+).

The protein belongs to the TRAFAC class TrmE-Era-EngA-EngB-Septin-like GTPase superfamily. EngB GTPase family. Mg(2+) is required as a cofactor.

Necessary for normal cell division and for the maintenance of normal septation. This Roseobacter denitrificans (strain ATCC 33942 / OCh 114) (Erythrobacter sp. (strain OCh 114)) protein is Probable GTP-binding protein EngB.